The primary structure comprises 145 residues: 3-hydroxyacyl-[acyl-carrier-protein] dehydratase FabZ (145 aa).

His-48 is a catalytic residue.

It belongs to the thioester dehydratase family. FabZ subfamily.

The protein resides in the cytoplasm. The catalysed reaction is a (3R)-hydroxyacyl-[ACP] = a (2E)-enoyl-[ACP] + H2O. In terms of biological role, involved in unsaturated fatty acids biosynthesis. Catalyzes the dehydration of short chain beta-hydroxyacyl-ACPs and long chain saturated and unsaturated beta-hydroxyacyl-ACPs. The protein is 3-hydroxyacyl-[acyl-carrier-protein] dehydratase FabZ of Geobacillus sp. (strain WCH70).